Reading from the N-terminus, the 486-residue chain is MNAHTGTVRGKERYRSGVMEYKRMGYWEPDYTPKDTDVIALFRVTPQEGVDPIEASAAVAGESSTATWTVVWTDRLTAAEKYRAKCHRVDPVPGTPGSYFAYIAYDLDLFEPGSIANLSASIIGNVFGFKPLKALRLEDMRFPVAYVKTFQGPATGIVVERERLDKFGRPLLGATVKPKLGLSGRNYGRVVYEALKGGLDFTKDDENINSQPFMHWRDRFLYCIEAVNRAQAASGEVKGTYLNITAGTMEDMYERAEFAKELGSCIVMIDLVIGYTAIQSMAKWARRNDMILHLHRAGHSTYTRQKSHGVSFRVIAKWMRLAGVDHIHAGTVVGKLEGDPNTTRGYYDVCREDFNPTKLEHGLFFDQSWASLNKMMPVASGGIHAGQMHQLLDLLGEDVVLQFGGGTIGHPMGIAAGAIANRVALEAMILARNEGRDYVHEGPEILAKAAQTCTPLKSALEVWKDVTFNYQSTDTPDFVPTALETV.

Substrate is bound by residues N125 and T175. Residue K177 is the Proton acceptor of the active site. K179 is a substrate binding site. K203, D205, and E206 together coordinate Mg(2+). K203 is modified (N6-carboxylysine). Residue H295 is the Proton acceptor of the active site. Residues R296, H328, and S380 each coordinate substrate.

Belongs to the RuBisCO large chain family. Type I subfamily. As to quaternary structure, heterohexadecamer of 8 large chains and 8 small chains. Mg(2+) is required as a cofactor.

It catalyses the reaction 2 (2R)-3-phosphoglycerate + 2 H(+) = D-ribulose 1,5-bisphosphate + CO2 + H2O. The enzyme catalyses D-ribulose 1,5-bisphosphate + O2 = 2-phosphoglycolate + (2R)-3-phosphoglycerate + 2 H(+). In terms of biological role, ruBisCO catalyzes two reactions: the carboxylation of D-ribulose 1,5-bisphosphate, the primary event in carbon dioxide fixation, as well as the oxidative fragmentation of the pentose substrate. Both reactions occur simultaneously and in competition at the same active site. The sequence is that of Ribulose bisphosphate carboxylase large chain from Bradyrhizobium diazoefficiens (strain JCM 10833 / BCRC 13528 / IAM 13628 / NBRC 14792 / USDA 110).